Consider the following 331-residue polypeptide: uncharacterized protein (331 aa).

7 Pentapeptide repeat domains span residues 20–59 (LKLPGINLEAADLIGIVLNEADLRGANLLFCYLNRANLGQ), 60–99 (ANLVAANLSGASLNQADLAGADLRSANFHGAMLQGAILRD), 100–139 (SDMTLATLQDTNLIGADLRGADLSGATLTGACLRGANMRQ), 151–190 (AILGRADLQGANMKGVDLSRADLSYANLKEANLRDVDLRK), 191–230 (ADLSYANLKGALLTDANLSGAKLNGADLQNANLMRAKISE), 231–270 (AEMTAVNCQGAIMTHVNLNRTNLTGSNLSFTRMNSADLSR), and 271–310 (ANLTKANLQEAELIEAFFARANLTEANFINANLVRADLMS).

This is an uncharacterized protein from Synechocystis sp. (strain ATCC 27184 / PCC 6803 / Kazusa).